A 221-amino-acid chain; its full sequence is Deoxyribose-phosphate aldolase (221 aa).

Aspartate 96 acts as the Proton donor/acceptor in catalysis. Lysine 157 (schiff-base intermediate with acetaldehyde) is an active-site residue. Lysine 185 acts as the Proton donor/acceptor in catalysis.

Belongs to the DeoC/FbaB aldolase family. DeoC type 1 subfamily.

It is found in the cytoplasm. The catalysed reaction is 2-deoxy-D-ribose 5-phosphate = D-glyceraldehyde 3-phosphate + acetaldehyde. It participates in carbohydrate degradation; 2-deoxy-D-ribose 1-phosphate degradation; D-glyceraldehyde 3-phosphate and acetaldehyde from 2-deoxy-alpha-D-ribose 1-phosphate: step 2/2. In terms of biological role, catalyzes a reversible aldol reaction between acetaldehyde and D-glyceraldehyde 3-phosphate to generate 2-deoxy-D-ribose 5-phosphate. This Crocosphaera subtropica (strain ATCC 51142 / BH68) (Cyanothece sp. (strain ATCC 51142)) protein is Deoxyribose-phosphate aldolase.